Here is a 1105-residue protein sequence, read N- to C-terminus: uncharacterized protein (1105 aa).

The protein belongs to the mycobacterial PPE family.

This is an uncharacterized protein from Mycobacterium tuberculosis (strain CDC 1551 / Oshkosh).